We begin with the raw amino-acid sequence, 353 residues long: Uroporphyrinogen decarboxylase (353 aa).

Substrate-binding positions include 30–34, aspartate 79, tyrosine 154, serine 209, and histidine 332; that span reads RQAGR.

It belongs to the uroporphyrinogen decarboxylase family. Homodimer.

It localises to the cytoplasm. It catalyses the reaction uroporphyrinogen III + 4 H(+) = coproporphyrinogen III + 4 CO2. The protein operates within porphyrin-containing compound metabolism; protoporphyrin-IX biosynthesis; coproporphyrinogen-III from 5-aminolevulinate: step 4/4. Functionally, catalyzes the decarboxylation of four acetate groups of uroporphyrinogen-III to yield coproporphyrinogen-III. In Mycobacterium marinum (strain ATCC BAA-535 / M), this protein is Uroporphyrinogen decarboxylase.